The chain runs to 658 residues: DNA mismatch repair protein MutL (658 aa).

Positions 114 to 130 are enriched in basic and acidic residues; it reads RQEDSSHATQVKAEDGK. Disordered stretches follow at residues 114–137 and 369–391; these read RQED…PTAA and DYPT…TAPM.

This sequence belongs to the DNA mismatch repair MutL/HexB family.

This protein is involved in the repair of mismatches in DNA. It is required for dam-dependent methyl-directed DNA mismatch repair. May act as a 'molecular matchmaker', a protein that promotes the formation of a stable complex between two or more DNA-binding proteins in an ATP-dependent manner without itself being part of a final effector complex. The protein is DNA mismatch repair protein MutL of Neisseria meningitidis serogroup C (strain 053442).